We begin with the raw amino-acid sequence, 503 residues long: Aromatase (503 aa).

A run of 3 helical transmembrane segments spans residues 19 to 39, 53 to 73, and 303 to 323; these read EVVPIASIAILLLTGFLLLVW, FLGIGPLISHCRFLWMGIGSA, and MLIAAPDTMSVSVFFMLFLIA. Substrate contacts are provided by D309 and M374. C437 is a binding site for heme.

This sequence belongs to the cytochrome P450 family. The cofactor is heme.

The protein localises to the endoplasmic reticulum membrane. Its subcellular location is the microsome membrane. It carries out the reaction testosterone + 3 reduced [NADPH--hemoprotein reductase] + 3 O2 = 17beta-estradiol + formate + 3 oxidized [NADPH--hemoprotein reductase] + 4 H2O + 4 H(+). It catalyses the reaction androst-4-ene-3,17-dione + 3 reduced [NADPH--hemoprotein reductase] + 3 O2 = estrone + formate + 3 oxidized [NADPH--hemoprotein reductase] + 4 H2O + 4 H(+). The enzyme catalyses androst-4-ene-3,17-dione + reduced [NADPH--hemoprotein reductase] + O2 = 19-hydroxyandrost-4-ene-3,17-dione + oxidized [NADPH--hemoprotein reductase] + H2O + H(+). The catalysed reaction is 19-hydroxyandrost-4-ene-3,17-dione + reduced [NADPH--hemoprotein reductase] + O2 = 19-oxo-androst-4-ene-3,17-dione + oxidized [NADPH--hemoprotein reductase] + 2 H2O + H(+). It carries out the reaction 19-oxo-androst-4-ene-3,17-dione + reduced [NADPH--hemoprotein reductase] + O2 = estrone + formate + oxidized [NADPH--hemoprotein reductase] + H2O + 2 H(+). It catalyses the reaction estrone + reduced [NADPH--hemoprotein reductase] + O2 = 2-hydroxyestrone + oxidized [NADPH--hemoprotein reductase] + H2O + H(+). The enzyme catalyses 17beta-hydroxy-5alpha-androstan-3-one + reduced [NADPH--hemoprotein reductase] + O2 = 17beta,19-dihydroxy-3-oxo-5alpha-androstanone + oxidized [NADPH--hemoprotein reductase] + H2O + H(+). The catalysed reaction is 17beta,19-dihydroxy-3-oxo-5alpha-androstanone + reduced [NADPH--hemoprotein reductase] + O2 = 17beta-hydroxy-3,19-dioxo-5alpha-androstanone + oxidized [NADPH--hemoprotein reductase] + 2 H2O + H(+). It carries out the reaction 17beta-hydroxy-3,19-dioxo-5alpha-androstanone + reduced [NADPH--hemoprotein reductase] + O2 = 17beta-hydroxy-3-oxo-19-nor-5alpha-androst-1-ene + formate + oxidized [NADPH--hemoprotein reductase] + H2O + 2 H(+). The protein operates within steroid hormone biosynthesis. Its function is as follows. A cytochrome P450 monooxygenase that catalyzes the conversion of C19 androgens, androst-4-ene-3,17-dione (androstenedione) and testosterone to the C18 estrogens, estrone and estradiol, respectively. Catalyzes three successive oxidations of C19 androgens: two conventional oxidations at C19 yielding 19-hydroxy and 19-oxo/19-aldehyde derivatives, followed by a third oxidative aromatization step that involves C1-beta hydrogen abstraction combined with cleavage of the C10-C19 bond to yield a phenolic A ring and formic acid. Alternatively, the third oxidative reaction yields a 19-norsteroid and formic acid. Converts dihydrotestosterone to delta1,10-dehydro 19-nordihydrotestosterone and may play a role in homeostasis of this potent androgen. Also displays 2-hydroxylase activity toward estrone. Mechanistically, uses molecular oxygen inserting one oxygen atom into a substrate, and reducing the second into a water molecule, with two electrons provided by NADPH via cytochrome P450 reductase (CPR; NADPH-ferrihemoprotein reductase). This is Aromatase (CYP19A1) from Capra hircus (Goat).